A 260-amino-acid chain; its full sequence is Type III pantothenate kinase (260 aa).

6–13 (DVGNTNIT) provides a ligand contact to ATP. 107-110 (GADR) contacts substrate. Asp109 acts as the Proton acceptor in catalysis. Asp129 contacts K(+). Thr132 serves as a coordination point for ATP. A substrate-binding site is contributed by Thr184.

This sequence belongs to the type III pantothenate kinase family. In terms of assembly, homodimer. The cofactor is NH4(+). It depends on K(+) as a cofactor.

Its subcellular location is the cytoplasm. It carries out the reaction (R)-pantothenate + ATP = (R)-4'-phosphopantothenate + ADP + H(+). Its pathway is cofactor biosynthesis; coenzyme A biosynthesis; CoA from (R)-pantothenate: step 1/5. Functionally, catalyzes the phosphorylation of pantothenate (Pan), the first step in CoA biosynthesis. This Agathobacter rectalis (strain ATCC 33656 / DSM 3377 / JCM 17463 / KCTC 5835 / VPI 0990) (Eubacterium rectale) protein is Type III pantothenate kinase.